An 879-amino-acid chain; its full sequence is Alanine--tRNA ligase (879 aa).

Zn(2+)-binding residues include His566, His570, Cys668, and His672.

This sequence belongs to the class-II aminoacyl-tRNA synthetase family. Zn(2+) serves as cofactor.

The protein resides in the cytoplasm. The enzyme catalyses tRNA(Ala) + L-alanine + ATP = L-alanyl-tRNA(Ala) + AMP + diphosphate. Catalyzes the attachment of alanine to tRNA(Ala) in a two-step reaction: alanine is first activated by ATP to form Ala-AMP and then transferred to the acceptor end of tRNA(Ala). Also edits incorrectly charged Ser-tRNA(Ala) and Gly-tRNA(Ala) via its editing domain. The protein is Alanine--tRNA ligase of Listeria monocytogenes serotype 4b (strain F2365).